The following is a 116-amino-acid chain: UPF0102 protein LA_2381 (116 aa).

It belongs to the UPF0102 family.

The chain is UPF0102 protein LA_2381 from Leptospira interrogans serogroup Icterohaemorrhagiae serovar Lai (strain 56601).